Reading from the N-terminus, the 481-residue chain is Serine/threonine-protein kinase US3 (481 aa).

The segment at 12–63 (GQGRRKEEAVPPETKPSRVFPHGPFYTPAEDACLDSPPPETPKPSHTTPPSE) is disordered. In terms of domain architecture, Protein kinase spans 191-478 (FTIHGALTPG…AAELLCLPLF (288 aa)). Residues 197–205 (LTPGSEGCV) and K220 each bind ATP. D305 (proton acceptor) is an active-site residue.

The protein belongs to the protein kinase superfamily. Ser/Thr protein kinase family. As to quaternary structure, interacts with host LAT; this interaction prevents LAT activation of TRAF6. In terms of processing, phosphorylated by UL13; this phosphorylation regulates subsequent phosphorylation of UL31 and UL34 by US3. Autophosphorylated.

It localises to the host cytoplasm. Its subcellular location is the host nucleus. The enzyme catalyses L-seryl-[protein] + ATP = O-phospho-L-seryl-[protein] + ADP + H(+). It catalyses the reaction L-threonyl-[protein] + ATP = O-phospho-L-threonyl-[protein] + ADP + H(+). Its function is as follows. Multifunctional serine/threonine kinase that plays a role in several processes including egress of virus particles from the nucleus, modulation of the actin cytoskeleton and inhibition of host immune response. Phosphorylates UL31 and UL34, two critical regulators of capsid budding from nucleus to endoplasmic reticulum, thereby facilitating virion egress. Modulates and redistributes host components of the nuclear envelope, including LMNA, emerin/EMD and the nuclear matrix protein MATR3. In turn, facilitates nuclear pore impairment and capsid release through impaired nuclear envelope. Phosphorylates envelope glycoprotein B (gB), probably to direct it to the cell surface. Promotes virus intracellular spread by restructuring host cell cytoskeleton. Blocks host apoptosis to extend cell survival and allow efficient viral replication. Promotes viral gene expression by phosphorylating host HDAC2 to reduce viral genome silencing. Strongly inhibits TCR-activated signal transduction in T-cells by reducing the ubiquitination of LAT and TRAF6, leading to a suboptimal activation of LAT. Subverts host antiviral innate immunity by inhibiting type I interferon production through hyperphosphorylation of beta-catenin/CTNNB1. In addition, phosphorylates the RNA sensor RIGI and the transcription factor IRF3 to prevent the RLR-mediated antiviral signaling pathway. Hyperphosphorylates host RELA and thereby dampens NF-kappa-B signaling. Acts as an immunoevasin partly responsible for inhibition of MR1 expression and antigen presentation in response to bacterial infection. The protein is Serine/threonine-protein kinase US3 (US3) of Human herpesvirus 1 (strain 17) (HHV-1).